The following is a 426-amino-acid chain: Glutamate-1-semialdehyde 2,1-aminomutase (426 aa).

Residue lysine 265 is modified to N6-(pyridoxal phosphate)lysine.

This sequence belongs to the class-III pyridoxal-phosphate-dependent aminotransferase family. HemL subfamily. Homodimer. Pyridoxal 5'-phosphate is required as a cofactor.

The protein resides in the cytoplasm. It catalyses the reaction (S)-4-amino-5-oxopentanoate = 5-aminolevulinate. The protein operates within porphyrin-containing compound metabolism; protoporphyrin-IX biosynthesis; 5-aminolevulinate from L-glutamyl-tRNA(Glu): step 2/2. The chain is Glutamate-1-semialdehyde 2,1-aminomutase from Shigella flexneri serotype 5b (strain 8401).